A 308-amino-acid chain; its full sequence is Paired box protein 3 homolog (308 aa).

The paired DNA-binding region spans 13–140; sequence GQGRVNQLGG…PAIKRLIGNK (128 aa). Residues 16 to 72 are PAI subdomain; that stretch reads RVNQLGGVFINGRPLPIHVRHAIISMAKKGIKPCHISRQLKVSHGAVSKILNRYAET. The segment at 92 to 140 is RED subdomain; that stretch reads AVEKEILIACDENPQMSAAELRDWLIHKDICTKGNAPTVPAIKRLIGNK. Residues 168–191 form a disordered region; that stretch reads CSKSSSDDEEGSSPSNDASSRRNR. The segment at residues 187 to 246 is a DNA-binding region (homeobox); that stretch reads SRRNRTSFTAEQLDVLENAFRADTYPHANARESISKETGLSEEKIMTWFSNRRARCRKNM.

Belongs to the paired homeobox family.

It is found in the nucleus. Functionally, transcriptional activator. Regulates the lateral/ventral epidermal cell fate decision. This chain is Paired box protein 3 homolog, found in Caenorhabditis elegans.